Here is a 580-residue protein sequence, read N- to C-terminus: Arginine--tRNA ligase (580 aa).

The 'HIGH' region motif lies at 131 to 141 (ANPTGPMHVGH).

Belongs to the class-I aminoacyl-tRNA synthetase family. Monomer.

The protein resides in the cytoplasm. The enzyme catalyses tRNA(Arg) + L-arginine + ATP = L-arginyl-tRNA(Arg) + AMP + diphosphate. In Cereibacter sphaeroides (strain ATCC 17029 / ATH 2.4.9) (Rhodobacter sphaeroides), this protein is Arginine--tRNA ligase.